A 103-amino-acid polypeptide reads, in one-letter code: Cyanovirin-N homolog (103 aa).

Belongs to the cyanovirin-N family.

Functionally, mannose-binding lectin. In Tuber borchii (White truffle), this protein is Cyanovirin-N homolog.